The primary structure comprises 361 residues: Probable dual-specificity RNA methyltransferase RlmN (361 aa).

Glu-91 functions as the Proton acceptor in the catalytic mechanism. In terms of domain architecture, Radical SAM core spans 97–335 (QHYGLSVCVT…CVVRQEHGTD (239 aa)). The cysteines at positions 104 and 340 are disulfide-linked. Residues Cys-111, Cys-115, and Cys-118 each coordinate [4Fe-4S] cluster. Residues 163–164 (GE), Ser-195, 218–220 (SLH), and Asn-296 contribute to the S-adenosyl-L-methionine site. Cys-340 functions as the S-methylcysteine intermediate in the catalytic mechanism.

Belongs to the radical SAM superfamily. RlmN family. [4Fe-4S] cluster serves as cofactor.

It is found in the cytoplasm. It carries out the reaction adenosine(2503) in 23S rRNA + 2 reduced [2Fe-2S]-[ferredoxin] + 2 S-adenosyl-L-methionine = 2-methyladenosine(2503) in 23S rRNA + 5'-deoxyadenosine + L-methionine + 2 oxidized [2Fe-2S]-[ferredoxin] + S-adenosyl-L-homocysteine. It catalyses the reaction adenosine(37) in tRNA + 2 reduced [2Fe-2S]-[ferredoxin] + 2 S-adenosyl-L-methionine = 2-methyladenosine(37) in tRNA + 5'-deoxyadenosine + L-methionine + 2 oxidized [2Fe-2S]-[ferredoxin] + S-adenosyl-L-homocysteine. Functionally, specifically methylates position 2 of adenine 2503 in 23S rRNA and position 2 of adenine 37 in tRNAs. The sequence is that of Probable dual-specificity RNA methyltransferase RlmN from Streptococcus mutans serotype c (strain ATCC 700610 / UA159).